A 573-amino-acid chain; its full sequence is Sterol esterase 1 (573 aa).

At 1–12 (MGVSAVLKRARN) the chain is on the cytoplasmic side. Residues 13 to 33 (LLATFIVCCFMAVVLVLALAH) lie within the membrane without spanning it. Residues 34-573 (HFINEHRDTR…TELEMVAEKA (540 aa)) lie on the Cytoplasmic side of the membrane. Serine 315 (nucleophile) is an active-site residue. Catalysis depends on charge relay system residues aspartate 489 and histidine 520.

The protein belongs to the AB hydrolase superfamily. Not N-glycosylated.

It localises to the lipid droplet. The protein localises to the membrane. It carries out the reaction a sterol ester + H2O = a sterol + a fatty acid + H(+). Functionally, mediates the hydrolysis of steryl esters, thereby playing a central role in lipid metabolism. Under heme-deficient conditions, it constitutes the major steryl ester hydrolase, suggesting that it plays a central role in mobilization of steryl esters under anaerobic conditions. This is Sterol esterase 1 (YEH1) from Saccharomyces cerevisiae (strain ATCC 204508 / S288c) (Baker's yeast).